Reading from the N-terminus, the 498-residue chain is ATP synthase subunit alpha 1 (498 aa).

The protein belongs to the ATPase alpha/beta chains family. In terms of assembly, F-type ATPases have 2 components, CF(1) - the catalytic core - and CF(0) - the membrane proton channel. CF(1) has five subunits: alpha(3), beta(3), gamma(1), delta(1), epsilon(1). CF(0) has three main subunits: a(1), b(2) and c(9-12). The alpha and beta chains form an alternating ring which encloses part of the gamma chain. CF(1) is attached to CF(0) by a central stalk formed by the gamma and epsilon chains, while a peripheral stalk is formed by the delta and b chains.

The protein resides in the cell membrane. The enzyme catalyses ATP + H2O + 4 H(+)(in) = ADP + phosphate + 5 H(+)(out). Produces ATP from ADP in the presence of a proton gradient across the membrane. The alpha chain is a regulatory subunit. This Listeria monocytogenes serovar 1/2a (strain ATCC BAA-679 / EGD-e) protein is ATP synthase subunit alpha 1.